Here is a 328-residue protein sequence, read N- to C-terminus: GMP reductase (328 aa).

The active-site Thioimidate intermediate is the Cys-176. 205–228 (IIADGGIRTHGDIAKSIRFGASMI) is a binding site for NADP(+).

It belongs to the IMPDH/GMPR family. GuaC type 2 subfamily.

The enzyme catalyses IMP + NH4(+) + NADP(+) = GMP + NADPH + 2 H(+). In terms of biological role, catalyzes the irreversible NADPH-dependent deamination of GMP to IMP. It functions in the conversion of nucleobase, nucleoside and nucleotide derivatives of G to A nucleotides, and in maintaining the intracellular balance of A and G nucleotides. This chain is GMP reductase, found in Streptococcus pneumoniae (strain JJA).